The primary structure comprises 548 residues: Membrane protein insertase YidC (548 aa).

Residues 6–26 (NLLVIALLFVSFMIWQAWEQD) traverse the membrane as a helical segment. Positions 28–56 (NPQPQTQQTTQTTTTAAGSAADQGVPASG) are disordered. The span at 29–42 (PQPQTQQTTQTTTT) shows a compositional bias: low complexity. 4 helical membrane-spanning segments follow: residues 350-370 (FVGN…GIMY), 424-444 (FPLI…MGSI), 458-478 (LSAQ…MFFI), and 499-519 (PVIF…YYIV).

It belongs to the OXA1/ALB3/YidC family. Type 1 subfamily. In terms of assembly, interacts with the Sec translocase complex via SecD. Specifically interacts with transmembrane segments of nascent integral membrane proteins during membrane integration.

It is found in the cell inner membrane. Functionally, required for the insertion and/or proper folding and/or complex formation of integral membrane proteins into the membrane. Involved in integration of membrane proteins that insert both dependently and independently of the Sec translocase complex, as well as at least some lipoproteins. Aids folding of multispanning membrane proteins. This Salmonella enteritidis PT4 (strain P125109) protein is Membrane protein insertase YidC.